Reading from the N-terminus, the 372-residue chain is Neuropeptide S receptor (372 aa).

Residues methionine 1–glutamine 52 lie on the Extracellular side of the membrane. N-linked (GlcNAc...) asparagine glycans are attached at residues asparagine 4 and asparagine 13. Residues leucine 53 to serine 73 traverse the membrane as a helical segment. Residues threonine 74–arginine 82 lie on the Cytoplasmic side of the membrane. A helical transmembrane segment spans residues methionine 83–leucine 103. The Extracellular segment spans residues threonine 104–arginine 122. A disulfide bond links cysteine 121 and cysteine 198. The helical transmembrane segment at isoleucine 123 to serine 143 threads the bilayer. Residues isoleucine 144–lysine 165 are Cytoplasmic-facing. A helical transmembrane segment spans residues valine 166 to phenylalanine 186. At glycine 187 to threonine 213 the chain is on the extracellular side. A helical transmembrane segment spans residues isoleucine 214–valine 234. The Cytoplasmic portion of the chain corresponds to isoleucine 235–tyrosine 276. Residues serine 277–leucine 297 form a helical membrane-spanning segment. Residues aspartate 298 to serine 313 are Extracellular-facing. The helical transmembrane segment at valine 314 to phenylalanine 334 threads the bilayer. The Cytoplasmic portion of the chain corresponds to serine 335–isoleucine 372.

Belongs to the G-protein coupled receptor 1 family. Vasopressin/oxytocin receptor subfamily.

The protein localises to the cell membrane. Functionally, G-protein coupled receptor for neuropeptide S (NPS). Promotes mobilization of intracellular Ca(2+) stores. Inhibits cell growth in response to NPS binding. Involved in pathogenesis of asthma and other IgE-mediated diseases. This Rattus norvegicus (Rat) protein is Neuropeptide S receptor (Npsr1).